The primary structure comprises 206 residues: Large ribosomal subunit protein uL4 (206 aa).

It belongs to the universal ribosomal protein uL4 family. In terms of assembly, part of the 50S ribosomal subunit.

In terms of biological role, one of the primary rRNA binding proteins, this protein initially binds near the 5'-end of the 23S rRNA. It is important during the early stages of 50S assembly. It makes multiple contacts with different domains of the 23S rRNA in the assembled 50S subunit and ribosome. Functionally, forms part of the polypeptide exit tunnel. The protein is Large ribosomal subunit protein uL4 of Rhodopseudomonas palustris (strain BisB5).